The sequence spans 202 residues: IMP cyclohydrolase (202 aa).

The protein belongs to the archaeal IMP cyclohydrolase family.

It catalyses the reaction IMP + H2O = 5-formamido-1-(5-phospho-D-ribosyl)imidazole-4-carboxamide. It functions in the pathway purine metabolism; IMP biosynthesis via de novo pathway; IMP from 5-formamido-1-(5-phospho-D-ribosyl)imidazole-4-carboxamide: step 1/1. In terms of biological role, catalyzes the cyclization of 5-formylamidoimidazole-4-carboxamide ribonucleotide to IMP. The polypeptide is IMP cyclohydrolase (Methanothermobacter thermautotrophicus (strain ATCC 29096 / DSM 1053 / JCM 10044 / NBRC 100330 / Delta H) (Methanobacterium thermoautotrophicum)).